The chain runs to 89 residues: Signal recognition particle 19 kDa protein (89 aa).

Belongs to the SRP19 family. In terms of assembly, part of the signal recognition particle protein translocation system, which is composed of SRP and FtsY. Archaeal SRP consists of a 7S RNA molecule of 300 nucleotides and two protein subunits: SRP54 and SRP19.

The protein resides in the cytoplasm. Functionally, involved in targeting and insertion of nascent membrane proteins into the cytoplasmic membrane. Binds directly to 7S RNA and mediates binding of the 54 kDa subunit of the SRP. The sequence is that of Signal recognition particle 19 kDa protein from Methanobrevibacter smithii (strain ATCC 35061 / DSM 861 / OCM 144 / PS).